We begin with the raw amino-acid sequence, 197 residues long: UPF0301 protein BAV3012 (197 aa).

It belongs to the UPF0301 (AlgH) family.

The polypeptide is UPF0301 protein BAV3012 (Bordetella avium (strain 197N)).